Consider the following 74-residue polypeptide: UPF0154 protein OB1676 (74 aa).

A helical transmembrane segment spans residues 4–24; the sequence is IWVVLIAIAALVAGVALGFFI.

It belongs to the UPF0154 family.

It is found in the membrane. This chain is UPF0154 protein OB1676, found in Oceanobacillus iheyensis (strain DSM 14371 / CIP 107618 / JCM 11309 / KCTC 3954 / HTE831).